The sequence spans 102 residues: Large ribosomal subunit protein bL21 (102 aa).

Positions 79–91 (RKDSKRKKGHRQP) are enriched in basic residues. The segment at 79 to 102 (RKDSKRKKGHRQPYTKLTIDKINA) is disordered.

Belongs to the bacterial ribosomal protein bL21 family. In terms of assembly, part of the 50S ribosomal subunit. Contacts protein L20.

This protein binds to 23S rRNA in the presence of protein L20. This Staphylococcus epidermidis (strain ATCC 35984 / DSM 28319 / BCRC 17069 / CCUG 31568 / BM 3577 / RP62A) protein is Large ribosomal subunit protein bL21.